The sequence spans 124 residues: Holo-[acyl-carrier-protein] synthase (124 aa).

D7 and E55 together coordinate Mg(2+).

Belongs to the P-Pant transferase superfamily. AcpS family. It depends on Mg(2+) as a cofactor.

The protein localises to the cytoplasm. It catalyses the reaction apo-[ACP] + CoA = holo-[ACP] + adenosine 3',5'-bisphosphate + H(+). Transfers the 4'-phosphopantetheine moiety from coenzyme A to a Ser of acyl-carrier-protein. In Borreliella burgdorferi (strain ATCC 35210 / DSM 4680 / CIP 102532 / B31) (Borrelia burgdorferi), this protein is Holo-[acyl-carrier-protein] synthase.